The following is a 287-amino-acid chain: Large ribosomal subunit protein uL2 (287 aa).

A disordered region spans residues 221–287; sequence RGSVMNPCDH…SKRSRGGRDS (67 aa). Positions 258–287 are enriched in basic residues; the sequence is KTRKRNKPSNKFVLRKRRKTSKRSRGGRDS.

The protein belongs to the universal ribosomal protein uL2 family. Part of the 50S ribosomal subunit. Forms a bridge to the 30S subunit in the 70S ribosome.

Functionally, one of the primary rRNA binding proteins. Required for association of the 30S and 50S subunits to form the 70S ribosome, for tRNA binding and peptide bond formation. It has been suggested to have peptidyltransferase activity; this is somewhat controversial. Makes several contacts with the 16S rRNA in the 70S ribosome. The chain is Large ribosomal subunit protein uL2 from Synechococcus sp. (strain WH7803).